The chain runs to 516 residues: Ammonium transporter Amt1 (516 aa).

Helical transmembrane passes span 17-37, 59-79, 101-121, 130-150, 170-190, 214-234, 258-278, 286-306, 307-327, 342-362, and 374-394; these read YVWILVVSFLIFFMQPGFALL, ALGVLVYFVVGAGVATIVGGL, IDWLFGAVFAMTAATIVSGAV, YVVFAATITGFIYPVVQGLTW, LDFAGATVVHMCGGVAGLVGA, MLLAVLGTLILAFGWYGFNVG, VALVTTLGMGAGAVAAMVVST, PLWMANGLLAGLVAVTGAVPH, VTWWGGLVLGALGGAIVLPAY, VFAVHGVAGAVGTALIPVFAV, and VAGVGIIALWTIVASAVVFAA. The disordered stretch occupies residues 426–516; the sequence is IGESGPDRGV…SAAVDGGENQ (91 aa). Positions 445–491 are enriched in basic and acidic residues; the sequence is NDVRTDGGNDVRTDGGNDVRTDGGNDVRTDGGNDVRTDGGNDVRTDG.

Belongs to the ammonia transporter channel (TC 1.A.11.2) family. In terms of assembly, homotrimer. Interacts with both GlnK1 and GlnK2 after ammonium shock. Interaction is rapid, reversible and dependent on nitrogen source.

Its subcellular location is the cell membrane. Involved in the uptake of ammonium/ammonia (NH(4)(+)/NH(3)). Transport is electrogenic. The protein is Ammonium transporter Amt1 of Haloferax mediterranei (strain ATCC 33500 / DSM 1411 / JCM 8866 / NBRC 14739 / NCIMB 2177 / R-4) (Halobacterium mediterranei).